The following is a 239-amino-acid chain: tRNA (guanine-N(1)-)-methyltransferase (239 aa).

Residues glycine 108 and 128-133 each bind S-adenosyl-L-methionine; that span reads VGNFIV.

The protein belongs to the RNA methyltransferase TrmD family. As to quaternary structure, homodimer.

Its subcellular location is the cytoplasm. It catalyses the reaction guanosine(37) in tRNA + S-adenosyl-L-methionine = N(1)-methylguanosine(37) in tRNA + S-adenosyl-L-homocysteine + H(+). Specifically methylates guanosine-37 in various tRNAs. This chain is tRNA (guanine-N(1)-)-methyltransferase, found in Helicobacter hepaticus (strain ATCC 51449 / 3B1).